The sequence spans 126 residues: Small ribosomal subunit protein uS13 (126 aa).

The interval 95–126 (GLPVRGQRTHTNARTRKGPRKTVAGKKKPGKK) is disordered.

Belongs to the universal ribosomal protein uS13 family. Part of the 30S ribosomal subunit. Forms a loose heterodimer with protein S19. Forms two bridges to the 50S subunit in the 70S ribosome.

Its function is as follows. Located at the top of the head of the 30S subunit, it contacts several helices of the 16S rRNA. In the 70S ribosome it contacts the 23S rRNA (bridge B1a) and protein L5 of the 50S subunit (bridge B1b), connecting the 2 subunits; these bridges are implicated in subunit movement. Contacts the tRNAs in the A and P-sites. The polypeptide is Small ribosomal subunit protein uS13 (Acidothermus cellulolyticus (strain ATCC 43068 / DSM 8971 / 11B)).